The primary structure comprises 730 residues: Elongation factor 2 (730 aa).

The 210-residue stretch at 19–228 folds into the tr-type G domain; it reads QRIRNIGIVA…TGVSFKDVYD (210 aa). Residues 28–35, 94–98, and 148–151 each bind GTP; these read AHIDHGKT, DTPGH, and NKVD. Residue histidine 596 is modified to Diphthamide.

It belongs to the TRAFAC class translation factor GTPase superfamily. Classic translation factor GTPase family. EF-G/EF-2 subfamily.

It is found in the cytoplasm. Catalyzes the GTP-dependent ribosomal translocation step during translation elongation. During this step, the ribosome changes from the pre-translocational (PRE) to the post-translocational (POST) state as the newly formed A-site-bound peptidyl-tRNA and P-site-bound deacylated tRNA move to the P and E sites, respectively. Catalyzes the coordinated movement of the two tRNA molecules, the mRNA and conformational changes in the ribosome. The sequence is that of Elongation factor 2 from Methanosarcina acetivorans (strain ATCC 35395 / DSM 2834 / JCM 12185 / C2A).